Consider the following 314-residue polypeptide: 3'-5' exoribonuclease YhaM (314 aa).

An HD domain is found at 163 to 279 (HVVSMLDLAK…LHYIDNLDAK (117 aa)).

Belongs to the YhaM family.

Its function is as follows. Shows a 3'-5' exoribonuclease activity. This chain is 3'-5' exoribonuclease YhaM, found in Bacillus cereus (strain AH187).